The chain runs to 242 residues: Probable transcriptional regulatory protein Csac_0964 (242 aa).

The disordered stretch occupies residues 1 to 20; it reads MSGHSKWANIRHKKEKTDAQ.

Belongs to the TACO1 family.

It is found in the cytoplasm. This chain is Probable transcriptional regulatory protein Csac_0964, found in Caldicellulosiruptor saccharolyticus (strain ATCC 43494 / DSM 8903 / Tp8T 6331).